A 180-amino-acid polypeptide reads, in one-letter code: Nucleoside triphosphate/diphosphate phosphatase (180 aa).

R26 acts as the Proton donor in catalysis. The Mg(2+) site is built by N90, D106, D108, D110, D123, and E126.

The protein belongs to the Ntdp family. Requires Mg(2+) as cofactor.

The enzyme catalyses a ribonucleoside 5'-triphosphate + H2O = a ribonucleoside 5'-diphosphate + phosphate + H(+). The catalysed reaction is a ribonucleoside 5'-diphosphate + H2O = a ribonucleoside 5'-phosphate + phosphate + H(+). Its function is as follows. Has nucleoside phosphatase activity towards nucleoside triphosphates and nucleoside diphosphates. The protein is Nucleoside triphosphate/diphosphate phosphatase of Staphylococcus aureus (strain MRSA252).